We begin with the raw amino-acid sequence, 425 residues long: Type II secretion system protein L (425 aa).

At M1–P273 the chain is on the cytoplasmic side. A helical transmembrane segment spans residues W274–A290. At D291–Q425 the chain is on the periplasmic side.

Belongs to the GSP L family. In terms of assembly, type II secretion system is composed of four main components: the outer membrane complex, the inner membrane complex, the cytoplasmic secretion ATPase and the periplasm-spanning pseudopilus. Forms homodimers. Interacts with OutM/GspM. Interacts with OutE/GspE and OutF/GspF.

The protein localises to the cell inner membrane. Inner membrane component of the type II secretion system required for the energy-dependent secretion of extracellular factors such as proteases and toxins from the periplasm. Plays a role in the complex assembly and recruits OutM resulting in a stable complex in the inner membrane. Provides thus a link between the energy-providing OutE protein in the cytoplasm and the rest of the T2SS machinery. The polypeptide is Type II secretion system protein L (outL) (Pectobacterium carotovorum subsp. carotovorum (Erwinia carotovora subsp. carotovora)).